The following is a 553-amino-acid chain: MEVSTTMMIVAIVAAYLLWFKSITKSMKGPKGPTMWPVVGSLPGLIENGNRMHEWIADNLRACSGTYQTCICAIPFLARKQLVTVTCDPKNLEHILKVRFDNYPKGPTWQAVFHDLLGEGIFNSDGDTWLFQRKTAALEFTTRTLRQAMGRWVNRAIKNRFCPILEMAQVQGKPVDLQDLLLRLTFDNICGLAFGKDPETLSPELPENNFATSFDRATEATLHRFIMPEFVWKLKKMLGLGLEVSLNNSLKQVDNYMTDVINTRKLELLNHQNGGPQHDDLLSRFMKKKESYSDKFLQHVALNFILAGRDTSSVALSWFFWLVSSNPRVEEKILVEICTILAETRGNDTSKWLEEPLVFEEVDQLMYLKAALSETLRLYPSVPEDSKHVISDDYLPDGTFVPAGSNITYSIYSTGRMKFIWGEDCLEFKPERWMSQDGDKFQVQDTFRFVAFNAGPRICLGKDLAYLQMKSIAAAVLLRHRLAVAPGHKVEQKMSLTLFMKDGLVMNVTPRDLTPILAKIEKFGKVESCAGEHHLINNGIHQPGSIAVNGIAA.

The chain crosses the membrane as a helical span at residues M8–T24. Residue C459 coordinates heme.

Belongs to the cytochrome P450 family. The cofactor is heme. In terms of tissue distribution, mostly expressed in the developing stigma of floral buds. Weakly detected in leaves, stems and flowers.

The protein resides in the membrane. The catalysed reaction is (9Z)-octadecenoyl-CoA + reduced [NADPH--hemoprotein reductase] + O2 = (9Z)-18-hydroxyoctadecenoyl-CoA + oxidized [NADPH--hemoprotein reductase] + H2O + H(+). It carries out the reaction (9Z,12Z)-octadecadienoyl-CoA + reduced [NADPH--hemoprotein reductase] + O2 = (9Z,12Z)-18-hydroxyoctadecadienoyl-CoA + oxidized [NADPH--hemoprotein reductase] + H2O + H(+). Fatty acyl-CoA omega-hydroxylase essential for the production of omega-hydroxy fatty acids and the biosynthesis of triacylglycerol-/diacylglycerol-based estolide polyesters in the stigma. Substrate preference is 16:0-CoA &gt; 18:1-CoA &gt; 18:0-CoA. The chain is Cytochrome P450 86A22 from Petunia hybrida (Petunia).